The chain runs to 450 residues: Phosphoglucosamine mutase (450 aa).

The active-site Phosphoserine intermediate is the S102. Mg(2+) is bound by residues S102, D243, D245, and D247. Residue S102 is modified to Phosphoserine.

This sequence belongs to the phosphohexose mutase family. Mg(2+) is required as a cofactor. Activated by phosphorylation.

It carries out the reaction alpha-D-glucosamine 1-phosphate = D-glucosamine 6-phosphate. In terms of biological role, catalyzes the conversion of glucosamine-6-phosphate to glucosamine-1-phosphate. This chain is Phosphoglucosamine mutase, found in Rhizobium meliloti (strain 1021) (Ensifer meliloti).